Here is a 146-residue protein sequence, read N- to C-terminus: Ferredoxin-thioredoxin reductase catalytic chain, chloroplastic (146 aa).

Residues 1 to 31 (MNLQAVSCSFGFLSSPLGVTPRTSFRRFVIR) constitute a chloroplast transit peptide. Cysteine 85 serves as a coordination point for [4Fe-4S] cluster. Cysteine 87 (nucleophile) is an active-site residue. Cysteine 87 and cysteine 117 are joined by a disulfide. [4Fe-4S] cluster contacts are provided by cysteine 104, cysteine 106, and cysteine 115.

This sequence belongs to the ferredoxin thioredoxin reductase beta subunit family. In terms of assembly, heterodimer of subunit A (variable subunit) and subunit B (catalytic subunit). Heterodimeric FTR forms a complex with ferredoxin and thioredoxin. The cofactor is [4Fe-4S] cluster.

It localises to the plastid. It is found in the chloroplast. It catalyses the reaction [thioredoxin]-disulfide + 2 reduced [2Fe-2S]-[ferredoxin] + 2 H(+) = [thioredoxin]-dithiol + 2 oxidized [2Fe-2S]-[ferredoxin]. In terms of biological role, catalytic subunit of the ferredoxin-thioredoxin reductase (FTR), which catalyzes the two-electron reduction of thioredoxins by the electrons provided by reduced ferredoxin. The chain is Ferredoxin-thioredoxin reductase catalytic chain, chloroplastic from Arabidopsis thaliana (Mouse-ear cress).